A 498-amino-acid polypeptide reads, in one-letter code: Probable malate:quinone oxidoreductase (498 aa).

The protein belongs to the MQO family. FAD serves as cofactor.

It carries out the reaction (S)-malate + a quinone = a quinol + oxaloacetate. The protein operates within carbohydrate metabolism; tricarboxylic acid cycle; oxaloacetate from (S)-malate (quinone route): step 1/1. This Prochlorococcus marinus (strain MIT 9312) protein is Probable malate:quinone oxidoreductase.